Here is a 239-residue protein sequence, read N- to C-terminus: U2 small nuclear ribonucleoprotein A' (239 aa).

4 LRR repeats span residues 19 to 40, 42 to 63, 64 to 85, and 88 to 109; these read KETE…GVLR, VHDA…PRMK, RLQT…IGKV, and NLKT…DPLA. An LRRCT domain is found at 122 to 160; that stretch reads NPVAQKQYYRLYLIWRIPSLHILDFERVRRNERLRAEEV.

It belongs to the U2 small nuclear ribonucleoprotein A family. In terms of assembly, belongs to the 40S cdc5-associated complex (or cwf complex), a spliceosome sub-complex reminiscent of a late-stage spliceosome composed of the U2, U5 and U6 snRNAs and at least brr2, cdc5, cwf2/prp3, cwf3/syf1, cwf4/syf3, cwf5/ecm2, spp42/cwf6, cwf7/spf27, cwf8, cwf9, cwf10, cwf11, cwf12, prp45/cwf13, cwf14, cwf15, cwf16, cwf17, cwf18, cwf19, cwf20, cwf21, cwf22, cwf23, cwf24, cwf25, cwf26, cyp7/cwf27, cwf28, cwf29/ist3, lea1, msl1, prp5/cwf1, prp10, prp12/sap130, prp17, prp22, sap61, sap62, sap114, sap145, slu7, smb1, smd1, smd3, smf1, smg1 and syf2.

The protein resides in the nucleus. Involved in pre-mRNA splicing. This protein is associated with sn-RNP U2. It helps the A' protein to bind stem loop IV of U2 snRNA. This chain is U2 small nuclear ribonucleoprotein A' (lea1), found in Schizosaccharomyces pombe (strain 972 / ATCC 24843) (Fission yeast).